Reading from the N-terminus, the 282-residue chain is Bifunctional protein FolD (282 aa).

NADP(+) is bound by residues 164–166 and Ser189; that span reads GRS.

Belongs to the tetrahydrofolate dehydrogenase/cyclohydrolase family. In terms of assembly, homodimer.

It catalyses the reaction (6R)-5,10-methylene-5,6,7,8-tetrahydrofolate + NADP(+) = (6R)-5,10-methenyltetrahydrofolate + NADPH. It carries out the reaction (6R)-5,10-methenyltetrahydrofolate + H2O = (6R)-10-formyltetrahydrofolate + H(+). Its pathway is one-carbon metabolism; tetrahydrofolate interconversion. In terms of biological role, catalyzes the oxidation of 5,10-methylenetetrahydrofolate to 5,10-methenyltetrahydrofolate and then the hydrolysis of 5,10-methenyltetrahydrofolate to 10-formyltetrahydrofolate. In Streptococcus suis (strain 05ZYH33), this protein is Bifunctional protein FolD.